The sequence spans 319 residues: Acetyl-coenzyme A carboxylase carboxyl transferase subunit alpha (319 aa).

Residues 35 to 296 form the CoA carboxyltransferase C-terminal domain; that stretch reads NIDEEVHRLR…KAQLLADLAD (262 aa).

This sequence belongs to the AccA family. In terms of assembly, acetyl-CoA carboxylase is a heterohexamer composed of biotin carboxyl carrier protein (AccB), biotin carboxylase (AccC) and two subunits each of ACCase subunit alpha (AccA) and ACCase subunit beta (AccD).

The protein localises to the cytoplasm. The catalysed reaction is N(6)-carboxybiotinyl-L-lysyl-[protein] + acetyl-CoA = N(6)-biotinyl-L-lysyl-[protein] + malonyl-CoA. The protein operates within lipid metabolism; malonyl-CoA biosynthesis; malonyl-CoA from acetyl-CoA: step 1/1. Its function is as follows. Component of the acetyl coenzyme A carboxylase (ACC) complex. First, biotin carboxylase catalyzes the carboxylation of biotin on its carrier protein (BCCP) and then the CO(2) group is transferred by the carboxyltransferase to acetyl-CoA to form malonyl-CoA. The polypeptide is Acetyl-coenzyme A carboxylase carboxyl transferase subunit alpha (Klebsiella pneumoniae (strain 342)).